We begin with the raw amino-acid sequence, 190 residues long: Inner membrane-spanning protein YciB (190 aa).

Transmembrane regions (helical) follow at residues 22–42 (IYVATGALIVATAIQIVLTFA), 50–70 (MQLITFAMVAIFGGMTIFLHD), 76–96 (WKVTIVYAIFAIGLAVSHAMG), 118–138 (INWAWVAFFSFCAGLNVYVAF), and 148–168 (FKVFGLLIATFAYMIATGFYI).

Belongs to the YciB family.

The protein resides in the cell inner membrane. In terms of biological role, plays a role in cell envelope biogenesis, maintenance of cell envelope integrity and membrane homeostasis. This is Inner membrane-spanning protein YciB from Vibrio campbellii (strain ATCC BAA-1116).